The primary structure comprises 147 residues: Large ribosomal subunit protein uL11 (147 aa).

This sequence belongs to the universal ribosomal protein uL11 family. Part of the ribosomal stalk of the 50S ribosomal subunit. Interacts with L10 and the large rRNA to form the base of the stalk. L10 forms an elongated spine to which L12 dimers bind in a sequential fashion forming a multimeric L10(L12)X complex. One or more lysine residues are methylated.

Its function is as follows. Forms part of the ribosomal stalk which helps the ribosome interact with GTP-bound translation factors. This is Large ribosomal subunit protein uL11 from Cytophaga hutchinsonii (strain ATCC 33406 / DSM 1761 / CIP 103989 / NBRC 15051 / NCIMB 9469 / D465).